Here is a 321-residue protein sequence, read N- to C-terminus: Probable cell division protein WhiA (321 aa).

Positions 275–308 form a DNA-binding region, H-T-H motif; sequence SLDELGRLADPPMTKDAVAGRIRRLLAMADKRAA.

Belongs to the WhiA family.

In terms of biological role, involved in cell division and chromosome segregation. The sequence is that of Probable cell division protein WhiA from Micrococcus luteus (strain ATCC 4698 / DSM 20030 / JCM 1464 / CCM 169 / CCUG 5858 / IAM 1056 / NBRC 3333 / NCIMB 9278 / NCTC 2665 / VKM Ac-2230) (Micrococcus lysodeikticus).